The primary structure comprises 267 residues: 4-hydroxy-tetrahydrodipicolinate reductase (267 aa).

Position 11-16 (11-16) interacts with NAD(+); the sequence is GAAGRM. Arginine 39 contacts NADP(+). NAD(+) contacts are provided by residues 100-102 and 126-129; these read GTT and APNF. The active-site Proton donor/acceptor is histidine 156. (S)-2,3,4,5-tetrahydrodipicolinate is bound at residue histidine 157. Lysine 160 functions as the Proton donor in the catalytic mechanism. 166-167 serves as a coordination point for (S)-2,3,4,5-tetrahydrodipicolinate; the sequence is GT.

Belongs to the DapB family.

It is found in the cytoplasm. The enzyme catalyses (S)-2,3,4,5-tetrahydrodipicolinate + NAD(+) + H2O = (2S,4S)-4-hydroxy-2,3,4,5-tetrahydrodipicolinate + NADH + H(+). It carries out the reaction (S)-2,3,4,5-tetrahydrodipicolinate + NADP(+) + H2O = (2S,4S)-4-hydroxy-2,3,4,5-tetrahydrodipicolinate + NADPH + H(+). It participates in amino-acid biosynthesis; L-lysine biosynthesis via DAP pathway; (S)-tetrahydrodipicolinate from L-aspartate: step 4/4. Its function is as follows. Catalyzes the conversion of 4-hydroxy-tetrahydrodipicolinate (HTPA) to tetrahydrodipicolinate. The protein is 4-hydroxy-tetrahydrodipicolinate reductase of Moorella thermoacetica (strain ATCC 39073 / JCM 9320).